We begin with the raw amino-acid sequence, 407 residues long: 3-oxoacyl-[acyl-carrier-protein] synthase 1 (407 aa).

A Ketosynthase family 3 (KS3) domain is found at 1-405 (MKRVVITGLG…GTNVSLIIKK (405 aa)). Residues Cys164, His299, and His335 each act as for beta-ketoacyl synthase activity in the active site.

It belongs to the thiolase-like superfamily. Beta-ketoacyl-ACP synthases family. In terms of assembly, homodimer.

The protein resides in the cytoplasm. The enzyme catalyses a fatty acyl-[ACP] + malonyl-[ACP] + H(+) = a 3-oxoacyl-[ACP] + holo-[ACP] + CO2. The catalysed reaction is (3Z)-decenoyl-[ACP] + malonyl-[ACP] + H(+) = 3-oxo-(5Z)-dodecenoyl-[ACP] + holo-[ACP] + CO2. It functions in the pathway lipid metabolism; fatty acid biosynthesis. Its function is as follows. Involved in the type II fatty acid elongation cycle. Catalyzes the elongation of a wide range of acyl-ACP by the addition of two carbons from malonyl-ACP to an acyl acceptor. Can also use unsaturated fatty acids. Catalyzes a key reaction in unsaturated fatty acid (UFA) synthesis, the elongation of the cis-3-decenoyl-ACP produced by FabA. This is 3-oxoacyl-[acyl-carrier-protein] synthase 1 (fabB) from Buchnera aphidicola subsp. Baizongia pistaciae (strain Bp).